Here is a 171-residue protein sequence, read N- to C-terminus: Ribosome maturation factor RimP (171 aa).

It belongs to the RimP family.

The protein localises to the cytoplasm. Functionally, required for maturation of 30S ribosomal subunits. The chain is Ribosome maturation factor RimP from Anaeromyxobacter sp. (strain K).